Consider the following 488-residue polypeptide: Splicing factor U2AF 65 kDa subunit (488 aa).

2 stretches are compositionally biased toward basic and acidic residues: residues 25–55 (LESLQEDVKPDVKSDLNGNGEEKRDRDDEDR) and 78–129 (DRRD…KYRF). The tract at residues 25–133 (LESLQEDVKP…PKKYRFWDVP (109 aa)) is disordered. RRM domains follow at residues 175 to 257 (RRLY…RPRD), 282 to 359 (NKIF…LACA), and 389 to 479 (EILC…YYDV).

This sequence belongs to the splicing factor SR family. In terms of assembly, forms a heterodimer with the U2AF small subunit.

Its subcellular location is the nucleus. In terms of biological role, necessary for the splicing of pre-mRNA. Binds to the polypyrimidine tract of introns early during spliceosome assembly. This is Splicing factor U2AF 65 kDa subunit (uaf-1) from Caenorhabditis briggsae.